The following is a 336-amino-acid chain: Ornithine carbamoyltransferase, catabolic (336 aa).

Residues 57–60, Gln84, Arg108, and 135–138 each bind carbamoyl phosphate; these read STRT and HPTQ. L-ornithine is bound by residues Asn169, Asp233, and 237–238; that span reads SM. Carbamoyl phosphate is bound by residues 275–276 and Arg322; that span reads CL.

Belongs to the aspartate/ornithine carbamoyltransferase superfamily. OTCase family.

The protein localises to the cytoplasm. It carries out the reaction carbamoyl phosphate + L-ornithine = L-citrulline + phosphate + H(+). It participates in amino-acid degradation; L-arginine degradation via ADI pathway; carbamoyl phosphate from L-arginine: step 2/2. Functionally, reversibly catalyzes the transfer of the carbamoyl group from carbamoyl phosphate (CP) to the N(epsilon) atom of ornithine (ORN) to produce L-citrulline. The polypeptide is Ornithine carbamoyltransferase, catabolic (Photobacterium profundum (strain SS9)).